The sequence spans 694 residues: Probable methyltransferase PMT11 (694 aa).

Residues 1–14 (MKPLTNGDLFKSPT) lie on the Cytoplasmic side of the membrane. The helical; Signal-anchor for type II membrane protein transmembrane segment at 15-32 (LIKISALVFVTVAFFYLG) threads the bilayer. At 33–694 (KHWSDDGYQQ…LTCEKRLLRA (662 aa)) the chain is on the lumenal side. 2 N-linked (GlcNAc...) asparagine glycosylation sites follow: N69 and N77. The segment at 83-128 (IPATIRQQPPSVVADTEKVKVEANPPPPPPPSPSPPPPPGPVKSFG) is disordered. Positions 106–123 (NPPPPPPPSPSPPPPPGP) are enriched in pro residues. N-linked (GlcNAc...) asparagine glycosylation is found at N155, N378, and N423.

Belongs to the methyltransferase superfamily.

The protein resides in the golgi apparatus membrane. This chain is Probable methyltransferase PMT11, found in Arabidopsis thaliana (Mouse-ear cress).